The primary structure comprises 316 residues: Porphobilinogen deaminase (316 aa).

Residue C245 is modified to S-(dipyrrolylmethanemethyl)cysteine.

The protein belongs to the HMBS family. In terms of assembly, monomer. Dipyrromethane is required as a cofactor.

It carries out the reaction 4 porphobilinogen + H2O = hydroxymethylbilane + 4 NH4(+). The protein operates within porphyrin-containing compound metabolism; protoporphyrin-IX biosynthesis; coproporphyrinogen-III from 5-aminolevulinate: step 2/4. Its pathway is porphyrin-containing compound metabolism; chlorophyll biosynthesis. Tetrapolymerization of the monopyrrole PBG into the hydroxymethylbilane pre-uroporphyrinogen in several discrete steps. The polypeptide is Porphobilinogen deaminase (Prochlorococcus marinus (strain AS9601)).